A 639-amino-acid chain; its full sequence is Signal recognition particle receptor subunit alpha (639 aa).

The disordered stretch occupies residues 132 to 317 (APTTMKKFED…STKPSATKGT (186 aa)). Basic and acidic residues-rich tracts occupy residues 137–146 (KKFEDSEKAK) and 153–165 (IETR…EKAK). The residue at position 178 (serine 178) is a Phosphoserine. Basic and acidic residues predominate over residues 204-240 (ELSKEEQIRRKREEFIQKHGRGMEKSSKSSKSDAPKE). Threonine 285 carries the phosphothreonine modification. 3 positions are modified to phosphoserine: serine 297, serine 298, and serine 299. Polar residues predominate over residues 305–315 (AQNSTKPSATK). The interval 420 to 637 (YVVTFCGVNG…NAKAVVAALM (218 aa)) is NG domain. 426–433 (GVNGVGKS) contributes to the GTP binding site. Serine 474 carries the phosphoserine modification. 521–525 (DTAGR) serves as a coordination point for GTP. The residue at position 579 (threonine 579) is a Phosphothreonine. A GTP-binding site is contributed by 589 to 592 (TKFD).

Belongs to the GTP-binding SRP family. As to quaternary structure, heterodimer with SRPRB. Interacts with the signal recognition particle (SRP) complex subunit SRP54.

It localises to the endoplasmic reticulum membrane. Its function is as follows. Component of the SRP (signal recognition particle) receptor. Ensures, in conjunction with the signal recognition particle, the correct targeting of the nascent secretory proteins to the endoplasmic reticulum membrane system. Forms a guanosine 5'-triphosphate (GTP)-dependent complex with the SRP subunit SRP54. SRP receptor compaction and GTPase rearrangement drive SRP-mediated cotranslational protein translocation into the ER. This Bos taurus (Bovine) protein is Signal recognition particle receptor subunit alpha.